The sequence spans 319 residues: MKRIGVLTSGGDSPGMNAAVRAVVRKAIYHNVEVYGIYNGYSGLINGKIEKLEIGSVGDIIHRGGTKLYTARCPEFKTVEGREKGIENLKKFGIEGLVVIGGDGSFMGAKKLTELGFPCVGVPGTIDNDIPGTDFTIGFDTALNTVIDAIDKIRDTATSHERTYVVEVMGRHAGDIALWSGLAGGAESILIPEADYDMDEIIARLRRGHERGKKHSIIIVAEGVGSGVEFGKRIEEETSLETRVSVLGHIQRGGSPSAFDRVLASRLGAYAVELLLEGKGGRCVGIQSNELVHHDILDILDKKHTVDQNMYRLSQELSI.

Residue Gly11 coordinates ATP. Residue 21–25 (RAVVR) coordinates ADP. ATP-binding positions include 72–73 (RC) and 102–105 (GDGS). Asp103 lines the Mg(2+) pocket. 125–127 (TID) provides a ligand contact to substrate. Asp127 functions as the Proton acceptor in the catalytic mechanism. Arg154 is a binding site for ADP. Substrate contacts are provided by residues Arg162 and 169–171 (MGR). Residues 185 to 187 (GAE), Arg211, and 213 to 215 (KKH) contribute to the ADP site. Substrate contacts are provided by residues Glu222, Arg243, and 249–252 (HIQR).

This sequence belongs to the phosphofructokinase type A (PFKA) family. ATP-dependent PFK group I subfamily. Prokaryotic clade 'B1' sub-subfamily. Homotetramer. Mg(2+) serves as cofactor.

The protein resides in the cytoplasm. The enzyme catalyses beta-D-fructose 6-phosphate + ATP = beta-D-fructose 1,6-bisphosphate + ADP + H(+). It functions in the pathway carbohydrate degradation; glycolysis; D-glyceraldehyde 3-phosphate and glycerone phosphate from D-glucose: step 3/4. With respect to regulation, allosterically activated by ADP and other diphosphonucleosides, and allosterically inhibited by phosphoenolpyruvate. In terms of biological role, catalyzes the phosphorylation of D-fructose 6-phosphate to fructose 1,6-bisphosphate by ATP, the first committing step of glycolysis. This Bacillus pumilus (strain SAFR-032) protein is ATP-dependent 6-phosphofructokinase.